Here is a 117-residue protein sequence, read N- to C-terminus: Protein Turandot F (117 aa).

Residues M1–A22 form the signal peptide.

The protein belongs to the Turandot family.

The protein localises to the secreted. Its function is as follows. A humoral factor that may play a role in stress tolerance. The chain is Protein Turandot F from Drosophila sechellia (Fruit fly).